A 262-amino-acid polypeptide reads, in one-letter code: Acyl-[acyl-carrier-protein]--UDP-N-acetylglucosamine O-acyltransferase (262 aa).

Belongs to the transferase hexapeptide repeat family. LpxA subfamily. In terms of assembly, homotrimer.

It is found in the cytoplasm. The catalysed reaction is a (3R)-hydroxyacyl-[ACP] + UDP-N-acetyl-alpha-D-glucosamine = a UDP-3-O-[(3R)-3-hydroxyacyl]-N-acetyl-alpha-D-glucosamine + holo-[ACP]. The protein operates within glycolipid biosynthesis; lipid IV(A) biosynthesis; lipid IV(A) from (3R)-3-hydroxytetradecanoyl-[acyl-carrier-protein] and UDP-N-acetyl-alpha-D-glucosamine: step 1/6. In terms of biological role, involved in the biosynthesis of lipid A, a phosphorylated glycolipid that anchors the lipopolysaccharide to the outer membrane of the cell. The protein is Acyl-[acyl-carrier-protein]--UDP-N-acetylglucosamine O-acyltransferase of Psychromonas ingrahamii (strain DSM 17664 / CCUG 51855 / 37).